Here is a 158-residue protein sequence, read N- to C-terminus: GTP-dependent dephospho-CoA kinase (158 aa).

Residues Asp-35, Val-36, Asp-54, Lys-56, Glu-109, and Asp-132 each coordinate GTP.

The protein belongs to the GTP-dependent DPCK family.

The catalysed reaction is 3'-dephospho-CoA + GTP = GDP + CoA + H(+). Its pathway is cofactor biosynthesis; coenzyme A biosynthesis. Its function is as follows. Catalyzes the GTP-dependent phosphorylation of the 3'-hydroxyl group of dephosphocoenzyme A to form coenzyme A (CoA). The chain is GTP-dependent dephospho-CoA kinase from Methanococcus maripaludis (strain C5 / ATCC BAA-1333).